A 309-amino-acid chain; its full sequence is D-alanine--D-alanine ligase (309 aa).

One can recognise an ATP-grasp domain in the interval 105-304; it reads KQIWHSVGLP…FNDLVERILA (200 aa). An ATP-binding site is contributed by 135 to 190; it reads LQELGGRVIVKPAREGSSIGMSIADNGRSLALALQHAAEFDDDLLVEQWVEGAEYT. The Mg(2+) site is built by aspartate 258, glutamate 271, and asparagine 273.

The protein belongs to the D-alanine--D-alanine ligase family. Mg(2+) is required as a cofactor. Requires Mn(2+) as cofactor.

It is found in the cytoplasm. The catalysed reaction is 2 D-alanine + ATP = D-alanyl-D-alanine + ADP + phosphate + H(+). It participates in cell wall biogenesis; peptidoglycan biosynthesis. Its function is as follows. Cell wall formation. The chain is D-alanine--D-alanine ligase from Idiomarina loihiensis (strain ATCC BAA-735 / DSM 15497 / L2-TR).